A 459-amino-acid chain; its full sequence is Exodeoxyribonuclease 7 large subunit (459 aa).

Belongs to the XseA family. As to quaternary structure, heterooligomer composed of large and small subunits.

It localises to the cytoplasm. The catalysed reaction is Exonucleolytic cleavage in either 5'- to 3'- or 3'- to 5'-direction to yield nucleoside 5'-phosphates.. Its function is as follows. Bidirectionally degrades single-stranded DNA into large acid-insoluble oligonucleotides, which are then degraded further into small acid-soluble oligonucleotides. The polypeptide is Exodeoxyribonuclease 7 large subunit (Pseudomonas fluorescens (strain ATCC BAA-477 / NRRL B-23932 / Pf-5)).